The primary structure comprises 294 residues: Dolichol-phosphate mannosyltransferase (294 aa).

The disordered stretch occupies residues 1-27 (MSIALDMDASAKMRKQPGSSGWSTSST). Topologically, residues 1 to 263 (MSIALDMDAS…QQLVELYRFR (263 aa)) are cytoplasmic. Over residues 17–27 (PGSSGWSTSST) the composition is skewed to low complexity. Positions 35, 39, 70, 72, 123, 124, 125, 127, 151, 211, 237, and 243 each coordinate GDP-alpha-D-mannose. Residues D125 and Q127 each coordinate Mg(2+). Mn(2+) contacts are provided by D125 and Q127. A helical membrane pass occupies residues 264-284 (FGTVPIVFVLIVLLVLALYIW). Residues 285 to 294 (SHVLAPMLGA) lie on the Lumenal side of the membrane.

It belongs to the glycosyltransferase 2 family. Mg(2+) serves as cofactor. The cofactor is Mn(2+). Requires Ca(2+) as cofactor.

It localises to the endoplasmic reticulum membrane. It carries out the reaction a di-trans,poly-cis-dolichyl phosphate + GDP-alpha-D-mannose = a di-trans,poly-cis-dolichyl beta-D-mannosyl phosphate + GDP. Its pathway is protein modification; protein glycosylation. Transfers mannose from GDP-mannose to dolichol monophosphate to form dolichol phosphate mannose (Dol-P-Man) which is the mannosyl donor in pathways leading to N-glycosylation, glycosyl phosphatidylinositol membrane anchoring, and O-mannosylation of proteins. This chain is Dolichol-phosphate mannosyltransferase (DPM1), found in Mycosarcoma maydis (Corn smut fungus).